The following is a 405-amino-acid chain: 8-amino-7-oxononanoate synthase (405 aa).

Substrate is bound at residue Arg23. Residue 114-115 (GY) participates in pyridoxal 5'-phosphate binding. His139 serves as a coordination point for substrate. 3 residues coordinate pyridoxal 5'-phosphate: Ser185, His213, and Thr245. Position 248 is an N6-(pyridoxal phosphate)lysine (Lys248). Position 366 (Thr366) interacts with substrate.

The protein belongs to the class-II pyridoxal-phosphate-dependent aminotransferase family. BioF subfamily. As to quaternary structure, homodimer. Pyridoxal 5'-phosphate is required as a cofactor.

The enzyme catalyses 6-carboxyhexanoyl-[ACP] + L-alanine + H(+) = (8S)-8-amino-7-oxononanoate + holo-[ACP] + CO2. It participates in cofactor biosynthesis; biotin biosynthesis. Its function is as follows. Catalyzes the decarboxylative condensation of pimeloyl-[acyl-carrier protein] and L-alanine to produce 8-amino-7-oxononanoate (AON), [acyl-carrier protein], and carbon dioxide. The polypeptide is 8-amino-7-oxononanoate synthase (Delftia acidovorans (strain DSM 14801 / SPH-1)).